Consider the following 246-residue polypeptide: 1-(5-phosphoribosyl)-5-[(5-phosphoribosylamino)methylideneamino] imidazole-4-carboxamide isomerase (246 aa).

Asp-8 serves as the catalytic Proton acceptor. Residue Asp-131 is the Proton donor of the active site.

It belongs to the HisA/HisF family.

Its subcellular location is the cytoplasm. The catalysed reaction is 1-(5-phospho-beta-D-ribosyl)-5-[(5-phospho-beta-D-ribosylamino)methylideneamino]imidazole-4-carboxamide = 5-[(5-phospho-1-deoxy-D-ribulos-1-ylimino)methylamino]-1-(5-phospho-beta-D-ribosyl)imidazole-4-carboxamide. It functions in the pathway amino-acid biosynthesis; L-histidine biosynthesis; L-histidine from 5-phospho-alpha-D-ribose 1-diphosphate: step 4/9. The protein is 1-(5-phosphoribosyl)-5-[(5-phosphoribosylamino)methylideneamino] imidazole-4-carboxamide isomerase of Bordetella avium (strain 197N).